We begin with the raw amino-acid sequence, 253 residues long: Zinc finger protein JAGGED (253 aa).

Residues 1 to 46 form a disordered region; sequence MRHEENYLDLNNLPDDFSKDGNKQALEEGSSSGQRKKKGSKEGKDE. The segment covering 16-26 has biased composition (basic and acidic residues); it reads DFSKDGNKQAL. The segment at 51 to 73 adopts a C2H2-type zinc-finger fold; the sequence is YECRFCSLKFCKSQALGGHMNRH.

In terms of assembly, interacts with GATA18/HAN. As to expression, expressed in the emerging leaf, sepal, petal, stamen and carpel primordia. Not expressed in the apical shoot meristem (SAM).

It is found in the nucleus. In terms of biological role, controls the morphogenesis of lateral organs. Functions in lateral organ shape and is sufficient to induce proliferation and growth of lateral organ tissue. Is necessary and sufficient for bract formation, but its expression is excluded from the cryptic bract, which could be a cause of bractless flowers in Arabidopsis. Participates with FIL and YAB3 in regulating valve margin development. Functions with JGL to define stamen and carpel shape. Functions with AS1 and AS2 in the sepal and petal primordia to repress boundary-specifying genes for normal development of the organs. This is Zinc finger protein JAGGED (JAG) from Arabidopsis thaliana (Mouse-ear cress).